The sequence spans 330 residues: Phosphate acyltransferase (330 aa).

Belongs to the PlsX family. In terms of assembly, homodimer. Probably interacts with PlsY.

It is found in the cytoplasm. It carries out the reaction a fatty acyl-[ACP] + phosphate = an acyl phosphate + holo-[ACP]. The protein operates within lipid metabolism; phospholipid metabolism. In terms of biological role, catalyzes the reversible formation of acyl-phosphate (acyl-PO(4)) from acyl-[acyl-carrier-protein] (acyl-ACP). This enzyme utilizes acyl-ACP as fatty acyl donor, but not acyl-CoA. This Bacillus cytotoxicus (strain DSM 22905 / CIP 110041 / 391-98 / NVH 391-98) protein is Phosphate acyltransferase.